Consider the following 149-residue polypeptide: 3-dehydroquinate dehydratase (149 aa).

The Proton acceptor role is filled by Y26. Substrate-binding residues include N77, H83, and D90. The active-site Proton donor is H103. Substrate contacts are provided by residues L104 to S105 and R114.

Belongs to the type-II 3-dehydroquinase family. Homododecamer.

It carries out the reaction 3-dehydroquinate = 3-dehydroshikimate + H2O. It participates in metabolic intermediate biosynthesis; chorismate biosynthesis; chorismate from D-erythrose 4-phosphate and phosphoenolpyruvate: step 3/7. In terms of biological role, catalyzes a trans-dehydration via an enolate intermediate. The sequence is that of 3-dehydroquinate dehydratase from Psychromonas ingrahamii (strain DSM 17664 / CCUG 51855 / 37).